Reading from the N-terminus, the 341-residue chain is N-acetyl-gamma-glutamyl-phosphate reductase (341 aa).

Residue cysteine 145 is part of the active site.

This sequence belongs to the NAGSA dehydrogenase family. Type 1 subfamily.

Its subcellular location is the cytoplasm. The catalysed reaction is N-acetyl-L-glutamate 5-semialdehyde + phosphate + NADP(+) = N-acetyl-L-glutamyl 5-phosphate + NADPH + H(+). The protein operates within amino-acid biosynthesis; L-arginine biosynthesis; N(2)-acetyl-L-ornithine from L-glutamate: step 3/4. Functionally, catalyzes the NADPH-dependent reduction of N-acetyl-5-glutamyl phosphate to yield N-acetyl-L-glutamate 5-semialdehyde. This is N-acetyl-gamma-glutamyl-phosphate reductase from Streptomyces clavuligerus.